The primary structure comprises 295 residues: Indole-3-glycerol phosphate synthase (295 aa).

This sequence belongs to the TrpC family.

The catalysed reaction is 1-(2-carboxyphenylamino)-1-deoxy-D-ribulose 5-phosphate + H(+) = (1S,2R)-1-C-(indol-3-yl)glycerol 3-phosphate + CO2 + H2O. It participates in amino-acid biosynthesis; L-tryptophan biosynthesis; L-tryptophan from chorismate: step 4/5. In Synechococcus sp. (strain ATCC 27144 / PCC 6301 / SAUG 1402/1) (Anacystis nidulans), this protein is Indole-3-glycerol phosphate synthase.